We begin with the raw amino-acid sequence, 67 residues long: Conotoxin TsMMSK-011 (67 aa).

Positions 1–22 (MMSKLGVLLTICLLLFPLTVLP) are cleaved as a signal peptide. Residues 23-50 (MDGDQPADLPALRTQDIATDQSPWFDPV) constitute a propeptide that is removed on maturation. Disulfide bonds link Cys-53-Cys-65, Cys-54-Cys-61, and Cys-58-Cys-64. Pro-63 is subject to 4-hydroxyproline.

It belongs to the conotoxin M superfamily. As to expression, expressed by the venom duct.

It localises to the secreted. The polypeptide is Conotoxin TsMMSK-011 (Conus tessulatus (Tessellate cone)).